A 388-amino-acid chain; its full sequence is Processive diacylglycerol beta-glucosyltransferase (388 aa).

Belongs to the glycosyltransferase 28 family. UgtP subfamily.

It localises to the cell membrane. It carries out the reaction a 1,2-diacyl-3-O-(beta-D-glucopyranosyl)-sn-glycerol + UDP-alpha-D-glucose = a 1,2-diacyl-3-O-(beta-D-Glc-(1-&gt;6)-beta-D-Glc)-sn-glycerol + UDP + H(+). The enzyme catalyses a 1,2-diacyl-3-O-(beta-D-Glc-(1-&gt;6)-beta-D-Glc)-sn-glycerol + UDP-alpha-D-glucose = a 1,2-diacyl-3-O-(beta-D-Glc-(1-&gt;6)-beta-D-Glc-(1-&gt;6)-beta-D-Glc)-sn-glycerol + UDP + H(+). The catalysed reaction is a 1,2-diacyl-sn-glycerol + UDP-alpha-D-glucose = a 1,2-diacyl-3-O-(beta-D-glucopyranosyl)-sn-glycerol + UDP + H(+). It functions in the pathway glycolipid metabolism; diglucosyl-diacylglycerol biosynthesis. Processive glucosyltransferase involved in the biosynthesis of both the bilayer- and non-bilayer-forming membrane glucolipids. Is able to successively transfer up to three glucosyl residues to diacylglycerol (DAG), thereby catalyzing the formation of beta-monoglucosyl-DAG (3-O-(beta-D-glucopyranosyl)-1,2-diacyl-sn-glycerol), beta-diglucosyl-DAG (3-O-(beta-D-glucopyranosyl-beta-(1-&gt;6)-D-glucopyranosyl)-1,2-diacyl-sn-glycerol) and beta-triglucosyl-DAG (3-O-(beta-D-glucopyranosyl-beta-(1-&gt;6)-D-glucopyranosyl-beta-(1-&gt;6)-D-glucopyranosyl)-1,2-diacyl-sn-glycerol). Beta-diglucosyl-DAG is the predominant glycolipid found in Bacillales and is also used as a membrane anchor for lipoteichoic acid (LTA). The protein is Processive diacylglycerol beta-glucosyltransferase of Bacillus cereus (strain ATCC 14579 / DSM 31 / CCUG 7414 / JCM 2152 / NBRC 15305 / NCIMB 9373 / NCTC 2599 / NRRL B-3711).